Reading from the N-terminus, the 185-residue chain is Ribosome-recycling factor (185 aa).

The protein belongs to the RRF family.

The protein localises to the cytoplasm. Responsible for the release of ribosomes from messenger RNA at the termination of protein biosynthesis. May increase the efficiency of translation by recycling ribosomes from one round of translation to another. The polypeptide is Ribosome-recycling factor (Pectobacterium atrosepticum (strain SCRI 1043 / ATCC BAA-672) (Erwinia carotovora subsp. atroseptica)).